The following is a 316-amino-acid chain: Palmitoyltransferase ZDHHC3-A (316 aa).

Over 1 to 45 the chain is Cytoplasmic; that stretch reads MRSPVPRFRDVERQASGLQPPQCLPSCHERQSSMWFIKDACGIVC. Residues 46-66 traverse the membrane as a helical segment; it reads AIITWFLVFFAEFVVLFVMLI. Residues 67 to 70 lie on the Lumenal side of the membrane; the sequence is PSKN. The helical transmembrane segment at 71–91 threads the bilayer; sequence LTYSLVNGTLFNSLAFLALAS. Residues 92 to 169 lie on the Cytoplasmic side of the membrane; sequence HFRAMCTDPG…NCVGENNQKY (78 aa). Residues 124–175 enclose the DHHC domain; that stretch reads VYKCPKCCSIKPDRAHHCSVCKRCIRKMDHHCPWVNNCVGENNQKYFVLFTM. A lipid anchor (S-palmitoyl cysteine) is attached at C144. The S-palmitoyl cysteine intermediate role is filled by C155. The helical transmembrane segment at 170–190 threads the bilayer; that stretch reads FVLFTMYICLISLHSLVMVVF. At 191–212 the chain is on the lumenal side; the sequence is HFLNCFEDDWTKCSTFSPPATV. Residues 213–233 traverse the membrane as a helical segment; that stretch reads ILLILLCFEGLLFLIFTSVMF. Residues 234–316 lie on the Cytoplasmic side of the membrane; the sequence is GTQVHSICTD…DVIEIPLEPH (83 aa).

It belongs to the DHHC palmitoyltransferase family. In terms of assembly, monomer. Homooligomers. The monomeric form has a higher catalytic activity. Forms heterooligomers with zdhhc7. Post-translationally, autopalmitoylated.

Its subcellular location is the golgi apparatus membrane. It catalyses the reaction L-cysteinyl-[protein] + hexadecanoyl-CoA = S-hexadecanoyl-L-cysteinyl-[protein] + CoA. The catalysed reaction is L-cysteinyl-[protein] + tetradecanoyl-CoA = S-tetradecanoyl-L-cysteinyl-[protein] + CoA. The enzyme catalyses L-cysteinyl-[protein] + octadecanoyl-CoA = S-octadecanoyl-L-cysteinyl-[protein] + CoA. Golgi-localized palmitoyltransferase that catalyzes the addition of palmitate onto various protein substrates and regulates their association with membranes. Has no stringent fatty acid selectivity and in addition to palmitate can also transfer onto target proteins myristate from tetradecanoyl-CoA and stearate from octadecanoyl-CoA. In Danio rerio (Zebrafish), this protein is Palmitoyltransferase ZDHHC3-A (zdhhc3a).